The sequence spans 371 residues: MEVISTNTNGSTIFKNGAIPMNGHQNGTSKHQNGTSEHPNGHQNGTSEHQNGHQNGTSEQQNGTISHDNGNKLVGNSNCIKPGWFSEFSALWPGEAFSLKVEKLLFQGKSDYQDVMLFESATYGKVLTLDGAIQHTENGGFPYTEMIVHLPLGSIPNPKKVLIIGGGIGFTLFEMLRYPSIEKIDIVEIDDVVVDVSRKFFPYLAANFNDPRVTLVLGDGAAFVKAAQAEYYDAIIVDSSDPIGPAKDLFERPFFEAVAKALRPGGVVCTQAESIWLHMHIIKQIIANCRQVFKGSVNYAWTTVPTYPTGVIGYMLCSTEGPEVDFKNPVNPIDKETTQVKPKLAPLKFYNSDIHKAAFILPSFARSMIES.

Composition is skewed to polar residues over residues 1-14 (MEVI…STIF) and 23-70 (GHQN…HDNG). Positions 1 to 70 (MEVISTNTNG…QNGTISHDNG (70 aa)) are disordered. A PABS domain is found at 82 to 319 (PGWFSEFSAL…GVIGYMLCST (238 aa)). S-adenosyl-L-methionine contacts are provided by residues Gln113, Glu188, and 219–220 (DG). Asp238 (proton acceptor) is an active-site residue. An S-adenosyl-L-methionine-binding site is contributed by Tyr307.

Belongs to the class I-like SAM-binding methyltransferase superfamily. Spermidine/spermine synthase family. Mainly expressed in roots.

The catalysed reaction is putrescine + S-adenosyl-L-methionine = N-methylputrescine + S-adenosyl-L-homocysteine + H(+). Its pathway is alkaloid biosynthesis; nicotine biosynthesis. Functionally, involved in the biosynthesis of pyridine alkaloid natural products, leading mainly to the production of anabasine, anatabine, nicotine and nornicotine, effective deterrents against herbivores with antiparasitic and pesticide properties (neurotoxins); nornicotine serves as the precursor in the synthesis of the carcinogen compound N'-nitrosonornicotine (NNN). Methyltransferase that mediates the conversion of putrescine to N-methylputrescine. In Nicotiana attenuata (Coyote tobacco), this protein is Putrescine N-methyltransferase 2.